The primary structure comprises 149 residues: Macrodomain Ter protein (149 aa).

It belongs to the MatP family. As to quaternary structure, homodimer.

It localises to the cytoplasm. Required for spatial organization of the terminus region of the chromosome (Ter macrodomain) during the cell cycle. Prevents early segregation of duplicated Ter macrodomains during cell division. Binds specifically to matS, which is a 13 bp signature motif repeated within the Ter macrodomain. The chain is Macrodomain Ter protein from Vibrio vulnificus (strain CMCP6).